Here is a 171-residue protein sequence, read N- to C-terminus: Co-chaperone protein HscB (171 aa).

The J domain maps to 2–74 (DYFTLFGLPA…LTRAEYLLSL (73 aa)).

This sequence belongs to the HscB family. In terms of assembly, interacts with HscA and stimulates its ATPase activity. Interacts with IscU.

Its function is as follows. Co-chaperone involved in the maturation of iron-sulfur cluster-containing proteins. Seems to help targeting proteins to be folded toward HscA. This Salmonella arizonae (strain ATCC BAA-731 / CDC346-86 / RSK2980) protein is Co-chaperone protein HscB.